Here is a 150-residue protein sequence, read N- to C-terminus: Large ribosomal subunit protein bL9 (150 aa).

It belongs to the bacterial ribosomal protein bL9 family.

Binds to the 23S rRNA. In Shewanella putrefaciens (strain CN-32 / ATCC BAA-453), this protein is Large ribosomal subunit protein bL9.